Reading from the N-terminus, the 199-residue chain is Fe/S biogenesis protein NfuA (199 aa).

The [4Fe-4S] cluster site is built by C151 and C154.

This sequence belongs to the NfuA family. As to quaternary structure, homodimer. Requires [4Fe-4S] cluster as cofactor.

Functionally, involved in iron-sulfur cluster biogenesis. Binds a 4Fe-4S cluster, can transfer this cluster to apoproteins, and thereby intervenes in the maturation of Fe/S proteins. Could also act as a scaffold/chaperone for damaged Fe/S proteins. This chain is Fe/S biogenesis protein NfuA, found in Xanthomonas oryzae pv. oryzae (strain MAFF 311018).